A 101-amino-acid polypeptide reads, in one-letter code: UPF0235 protein Maeo_0841 (101 aa).

It belongs to the UPF0235 family.

The sequence is that of UPF0235 protein Maeo_0841 from Methanococcus aeolicus (strain ATCC BAA-1280 / DSM 17508 / OCM 812 / Nankai-3).